A 209-amino-acid polypeptide reads, in one-letter code: Yop proteins translocation protein K (209 aa).

Belongs to an operon involved in the translocation of Yop proteins across the bacterial membranes or in the specific control of this function. In Yersinia enterocolitica, this protein is Yop proteins translocation protein K (yscK).